A 387-amino-acid polypeptide reads, in one-letter code: Zn(2)-C6 fungal-type trascription factor aoiH (387 aa).

Residues cysteine 21–cysteine 48 constitute a DNA-binding region (zn(2)-C6 fungal-type). Residues valine 68–glutamine 87 show a composition bias toward polar residues. A disordered region spans residues valine 68–isoleucine 94.

Its subcellular location is the nucleus. In terms of biological role, transcription factor; part of the gene cluster that mediates the biosynthesis of a methylated derivative of known natural products orthosporin and diaporthin. Positively regultaes the expression of the non-reducing polyketide synthase aoiG and the O-methyltransferase aoiO. The chain is Zn(2)-C6 fungal-type trascription factor aoiH from Aspergillus oryzae (strain ATCC 42149 / RIB 40) (Yellow koji mold).